Reading from the N-terminus, the 362-residue chain is MLCVNVELRERSYPIHIGMGLLSEAQVYPLKKGDKVMIVTNPTIAQYYLSSVTDTLEKIGCSVENVQLPEGEQYKTLESLDLIFTALLKANHGRDTSIIALGGGVIGDIAGYAAASYQRGVRFIQIPTTLLAQVDSSVGGKTAVNHKLGKNMIGAFYQPCAVIIDTLTLTTLPKREIHAGLAEVIKYGAILDDEFFTWLEKHITNLVALEQQYLQQCIARCCQIKADVVTRDETEKGERALLNLGHTFGHAIETHLGYGNWLHGEAVATGMMIAAILSNKLGDLSLNDVTRLEKLLIQADLPTASPDTMKAEDYLPHMMRDKKVLAGKLRLVLLKSLGQAYVATDTDKEYVLDAIRTCSKKS.

NAD(+) contacts are provided by residues 70–75, 104–108, 128–129, Lys141, Lys150, and 168–171; these read EGEQYK, GVIGD, TT, and TLTT. 3 residues coordinate Zn(2+): Glu183, His246, and His263.

Belongs to the sugar phosphate cyclases superfamily. Dehydroquinate synthase family. The cofactor is Co(2+). Zn(2+) serves as cofactor. Requires NAD(+) as cofactor.

It is found in the cytoplasm. It catalyses the reaction 7-phospho-2-dehydro-3-deoxy-D-arabino-heptonate = 3-dehydroquinate + phosphate. It functions in the pathway metabolic intermediate biosynthesis; chorismate biosynthesis; chorismate from D-erythrose 4-phosphate and phosphoenolpyruvate: step 2/7. Its function is as follows. Catalyzes the conversion of 3-deoxy-D-arabino-heptulosonate 7-phosphate (DAHP) to dehydroquinate (DHQ). The sequence is that of 3-dehydroquinate synthase from Histophilus somni (strain 129Pt) (Haemophilus somnus).